Consider the following 90-residue polypeptide: UPF0213 protein Reut_B5558 (90 aa).

The 76-residue stretch at 5–80 (RQWYLYLLEC…KRMSSAQKIA (76 aa)) folds into the GIY-YIG domain.

It belongs to the UPF0213 family.

This is UPF0213 protein Reut_B5558 from Cupriavidus pinatubonensis (strain JMP 134 / LMG 1197) (Cupriavidus necator (strain JMP 134)).